A 549-amino-acid polypeptide reads, in one-letter code: Probable protein kinase UbiB (549 aa).

In terms of domain architecture, Protein kinase spans 123 to 501 (DFDDTPLASA…QQKAHKSNYL (379 aa)). ATP is bound by residues 129 to 137 (LASASISQV) and Lys152. Asp287 acts as the Proton acceptor in catalysis. 2 helical membrane passes run 498–518 (SNYL…LLNQ) and 520–540 (ATLW…VLGW).

It belongs to the ABC1 family. UbiB subfamily.

Its subcellular location is the cell inner membrane. The protein operates within cofactor biosynthesis; ubiquinone biosynthesis [regulation]. In terms of biological role, is probably a protein kinase regulator of UbiI activity which is involved in aerobic coenzyme Q (ubiquinone) biosynthesis. The polypeptide is Probable protein kinase UbiB (Shewanella pealeana (strain ATCC 700345 / ANG-SQ1)).